A 285-amino-acid polypeptide reads, in one-letter code: Extracellular metalloprotease NCU07200 (285 aa).

An N-terminal signal peptide occupies residues 1–18 (MQIKSFLLAAAAAPAALG). Zn(2+) is bound at residue H197. E198 is a catalytic residue. H201 is a binding site for Zn(2+). Cysteines 233 and 260 form a disulfide. N282 is a glycosylation site (N-linked (GlcNAc...) asparagine).

Belongs to the peptidase M43B family.

The protein resides in the secreted. Its function is as follows. Secreted metalloproteinase that allows assimilation of proteinaceous substrates. This chain is Extracellular metalloprotease NCU07200, found in Neurospora crassa (strain ATCC 24698 / 74-OR23-1A / CBS 708.71 / DSM 1257 / FGSC 987).